Reading from the N-terminus, the 302-residue chain is MKTVRLRAAAKINLYLEILGVRPDNFHELVMVLQSVDLADTVTLRAAPTTRVSCSHPLVPNDRTNLAVRAVEVLQKHTGIDEGVEIVIEKRIPVASGLAGGSTDAAAVLAGLNVLWDLGLTQRQLQSLGAQIGSDIPFCVTGGTALAMGRGEVLSPLPALKGVYLVLAKLADLQVSTAWAYQTYRREYLSEGTAPRARTSALLSAVASQEVARIAPLLHNDLERAVLPAYPQVSALREHLVSAGALGAMMSGSGPAVFGLARDRAHAEAVCAVLAGEPGLELFVCKTQQAGILMEESESSDL.

K11 is a catalytic residue. 93–103 (PVASGLAGGST) contacts ATP. D135 is an active-site residue.

It belongs to the GHMP kinase family. IspE subfamily.

It carries out the reaction 4-CDP-2-C-methyl-D-erythritol + ATP = 4-CDP-2-C-methyl-D-erythritol 2-phosphate + ADP + H(+). It functions in the pathway isoprenoid biosynthesis; isopentenyl diphosphate biosynthesis via DXP pathway; isopentenyl diphosphate from 1-deoxy-D-xylulose 5-phosphate: step 3/6. Functionally, catalyzes the phosphorylation of the position 2 hydroxy group of 4-diphosphocytidyl-2C-methyl-D-erythritol. The chain is 4-diphosphocytidyl-2-C-methyl-D-erythritol kinase from Gloeobacter violaceus (strain ATCC 29082 / PCC 7421).